Here is a 223-residue protein sequence, read N- to C-terminus: Killer cell lectin-like receptor subfamily B member 1B allele C (223 aa).

The Cytoplasmic segment spans residues 1-45 (MDTAVVYADLHLARTGEPKRESPPSLSPDTCQCPRWHRLALKLGC). The ITIM motif signature appears at 5 to 10 (VVYADL). The LCK-binding motif motif lies at 31–34 (CQCP). A helical; Signal-anchor for type II membrane protein transmembrane segment spans residues 46-66 (ACFILLVLSVIGLGVLVLTLL). The Extracellular segment spans residues 67–223 (QKPLLQNSPA…LKRESTCNDS (157 aa)). In terms of domain architecture, C-type lectin spans 101–211 (HRDKCFHVSQ…CDSDNIWICQ (111 aa)). Intrachain disulfides connect cysteine 122–cysteine 210 and cysteine 189–cysteine 202.

Homodimer; disulfide-linked. Interacts with tyrosine kinase LCK. Binds PTPN6/SHP-1 in a phosphorylation-dependent manner. As to expression, expressed in a subset of natural killer cells.

The protein localises to the membrane. Receptor for CLEC2D/OCIL. Ligand-binding contributes to inhibition of cytotoxic natural killer (NK) cells. May mediate MHC class I-independent 'missing-self' recognition of allografts, tumor cells and virus-infected cells. This is Killer cell lectin-like receptor subfamily B member 1B allele C from Rattus norvegicus (Rat).